Here is a 361-residue protein sequence, read N- to C-terminus: Peptide chain release factor 1 (361 aa).

At Gln-237 the chain carries N5-methylglutamine.

It belongs to the prokaryotic/mitochondrial release factor family. Methylated by PrmC. Methylation increases the termination efficiency of RF1.

The protein resides in the cytoplasm. Peptide chain release factor 1 directs the termination of translation in response to the peptide chain termination codons UAG and UAA. This Alcanivorax borkumensis (strain ATCC 700651 / DSM 11573 / NCIMB 13689 / SK2) protein is Peptide chain release factor 1.